The primary structure comprises 524 residues: Cytochrome P450 monooxygenase lnaC (524 aa).

A helical transmembrane segment spans residues 16 to 36; that stretch reads ALAVSCIAVSLFLLSPWIAYA. The N-linked (GlcNAc...) asparagine glycan is linked to asparagine 150. Cysteine 471 is a heme binding site.

It belongs to the cytochrome P450 family. Requires heme as cofactor.

Its subcellular location is the membrane. It functions in the pathway secondary metabolite biosynthesis. In terms of biological role, cytochrome P450 monooxygenase; part of the lna gene cluster that mediates the biosynthesis of diastereomeric piperazines. Lna and lnb clusters encode sets of enzymes that produce overlapping sets of previously undescribed metabolites such as piperazinomycin-like metabolites or morpholine. The lna and lnb biosynthetic pathways appear to be part of a signaling network that controls the formation of sclerotia, a resilient overwintering structure. One primary function of the non-canonical nonribosomal peptide synthetases lnaA and lnbA consists in the reduction of L-tyrosine. The presence in the clusters of tailoring enzymes such as the oxidoreductases lnaB, lnbB, lnaE or lnbE, as well as of the cytochrome P450 monooxygenases lnaC, lnaD, or lnbC, might explain formation of various diastereomeric piperazines. The chain is Cytochrome P450 monooxygenase lnaC from Aspergillus flavus (strain ATCC 200026 / FGSC A1120 / IAM 13836 / NRRL 3357 / JCM 12722 / SRRC 167).